A 210-amino-acid polypeptide reads, in one-letter code: Large ribosomal subunit protein uL3 (210 aa).

Positions 133-152 (ATHGNSLSHRVHGSTGQNQT) are disordered. Glutamine 151 carries the N5-methylglutamine modification.

It belongs to the universal ribosomal protein uL3 family. As to quaternary structure, part of the 50S ribosomal subunit. Forms a cluster with proteins L14 and L19. Post-translationally, methylated by PrmB.

In terms of biological role, one of the primary rRNA binding proteins, it binds directly near the 3'-end of the 23S rRNA, where it nucleates assembly of the 50S subunit. The sequence is that of Large ribosomal subunit protein uL3 from Francisella philomiragia subsp. philomiragia (strain ATCC 25017 / CCUG 19701 / FSC 153 / O#319-036).